Here is a 341-residue protein sequence, read N- to C-terminus: Dehydration-responsive element-binding protein 2C (341 aa).

The Nuclear localization signal signature appears at 8–48 (RKRKSRGTRDVAEILRQWREYNEQIEAESCIDGGGPKSIRK). The tract at residues 36-63 (SCIDGGGPKSIRKPPPKGSRKGCMKGKG) is disordered. A compositionally biased stretch (basic residues) spans 45–59 (SIRKPPPKGSRKGCM). A DNA-binding region (AP2/ERF) is located at residues 71–128 (DYRGVRQRRWGKWVAEIREPDGGARLWLGTFSSSYEAALAYDEAAKAIYGQSARLNLP).

It belongs to the AP2/ERF transcription factor family. ERF subfamily.

Its subcellular location is the nucleus. Functionally, transcriptional activator that binds specifically to the DNA sequence 5'-[AG]CCGAC-3'. Binding to the C-repeat/DRE element mediates high salinity- and abscisic acid-inducible transcription. The chain is Dehydration-responsive element-binding protein 2C (DREB2C) from Arabidopsis thaliana (Mouse-ear cress).